A 330-amino-acid polypeptide reads, in one-letter code: MVTKWKKICLFDNYEISNTGKIRNSKSGKLLKFSMRKGYYCCSLSKNNTKKTFNVHRLVARIFINNPSKFNVVNHKDGNKLNNNSSNLEWTNYKHNANHAITNGLKKIFRKKIHQYDINGNYIDSFESINNAGLYTGINPKHISSTCLGKRKTCGGFIWEYDKKFSKEKKNGLPLENNNNYLITKDGRVFSKRANKYLKPKIDPDGYLLVSISTNNVNKQISIHRLVAMTYIENPNNYPYVNHIDNNKQNNNITNLEWCTPKQNMIHHIKTRTKIYTVKVAQYDMNYNVITSYASIKEAGEKTGIDKSSIVRVCKGKQKYAGKYIWSYIN.

This is an uncharacterized protein from Acanthamoeba polyphaga (Amoeba).